The sequence spans 551 residues: Serine beta-lactamase-like protein LACTB, mitochondrial (551 aa).

The transit peptide at 1 to 113 (MYRLLSSVTA…RAIESSRDLL (113 aa)) directs the protein to the mitochondrion. Residues 69-101 (PADPEASGTTELSHEQALSPGSPHTPAPPAARG) form a disordered region. The Acyl-ester intermediate role is filled by Ser-162. The disordered stretch occupies residues 237–287 (LKMVKGTPPPSDQEKELKEKGGKNNEKSDAPKAKVEQDSEARCRSAKPGKK). Over residues 248–279 (DQEKELKEKGGKNNEKSDAPKAKVEQDSEARC) the composition is skewed to basic and acidic residues. Lys-287 and Lys-288 each carry N6-succinyllysine. Lys-301 and Lys-346 each carry N6-acetyllysine.

This sequence belongs to the peptidase S12 family. In terms of tissue distribution, expressed predominantly in liver.

The protein localises to the mitochondrion. Its function is as follows. Mitochondrial serine protease that acts as a regulator of mitochondrial lipid metabolism. Acts by decreasing protein levels of PISD, a mitochondrial enzyme that converts phosphatidylserine (PtdSer) to phosphatidylethanolamine (PtdEtn), thereby affecting mitochondrial lipid metabolism. It is unclear whether it acts directly by mediating proteolysis of PISD or by mediating proteolysis of another lipid metabolism protein. Acts as a tumor suppressor that has the ability to inhibit proliferation of multiple types of cancer cells: probably by promoting decreased levels of PISD, thereby affecting mitochondrial lipid metabolism. This is Serine beta-lactamase-like protein LACTB, mitochondrial from Mus musculus (Mouse).